We begin with the raw amino-acid sequence, 1035 residues long: FACT complex subunit SPT16 (1035 aa).

Residues 440–471 (EEEEEDVKPQIDKKPKINNSPKKPRSSTVGGR) form a disordered region. Residues 637–657 (LKKAAVKRETERKELADVIEQ) are a coiled coil. Residues 944 to 1035 (GSGSDDGSEE…GKKKKKGSRR (92 aa)) form a disordered region. Acidic residues-rich tracts occupy residues 949-985 (DGSE…EGDS) and 993-1002 (LSDEGEDWDE). The segment covering 1003–1027 (LERKAKRADEKHRTDRGGDSDDDGK) has biased composition (basic and acidic residues).

Belongs to the peptidase M24 family. SPT16 subfamily. In terms of assembly, forms a stable heterodimer with POB3. The SPT16-POB3 dimer weakly associates with multiple molecules of NHP6 to form the FACT complex.

The protein localises to the nucleus. It is found in the chromosome. Component of the FACT complex, a general chromatin factor that acts to reorganize nucleosomes. The FACT complex is involved in multiple processes that require DNA as a template such as mRNA elongation, DNA replication and DNA repair. During transcription elongation the FACT complex acts as a histone chaperone that both destabilizes and restores nucleosomal structure. It facilitates the passage of RNA polymerase II and transcription by promoting the dissociation of one histone H2A-H2B dimer from the nucleosome, then subsequently promotes the reestablishment of the nucleosome following the passage of RNA polymerase II. This Cryptococcus neoformans var. neoformans serotype D (strain B-3501A) (Filobasidiella neoformans) protein is FACT complex subunit SPT16 (SPT16).